The primary structure comprises 452 residues: tRNA pseudouridine synthase Pus10 (452 aa).

Residues 71–200 (EMLRALAPSC…DGHVEIQIQP (130 aa)) form the THUMP domain. Asp269 acts as the Nucleophile in catalysis. Substrate is bound by residues Tyr335 and Tyr406.

Belongs to the pseudouridine synthase Pus10 family.

It carries out the reaction uridine(54) in tRNA = pseudouridine(54) in tRNA. It catalyses the reaction uridine(55) in tRNA = pseudouridine(55) in tRNA. Functionally, responsible for synthesis of pseudouridine from uracil-54 and uracil-55 in the psi GC loop of transfer RNAs. This Methanothrix thermoacetophila (strain DSM 6194 / JCM 14653 / NBRC 101360 / PT) (Methanosaeta thermophila) protein is tRNA pseudouridine synthase Pus10.